The primary structure comprises 139 residues: Hydrogenase maturation factor HypA (139 aa).

His-2 contributes to the Ni(2+) binding site. Positions 73, 76, 110, and 113 each coordinate Zn(2+).

It belongs to the HypA/HybF family.

Involved in the maturation of [NiFe] hydrogenases. Required for nickel insertion into the metal center of the hydrogenase. This is Hydrogenase maturation factor HypA from Pyrococcus horikoshii (strain ATCC 700860 / DSM 12428 / JCM 9974 / NBRC 100139 / OT-3).